A 182-amino-acid polypeptide reads, in one-letter code: pEARLI1-like lipid transfer protein 2 (182 aa).

A signal peptide spans 1–25 (MASKNSASLALFFALNILFFTLTAG). Pro residues predominate over residues 33–92 (SPKPRPLPNPKVPSPKVPTPSVPSPYVPTPSVPSPSVPTPSVPSPSVPSPNPTPVIPPRT). The tract at residues 33-94 (SPKPRPLPNP…TPVIPPRTPG (62 aa)) is disordered. 7 repeat units span residues 42–46 (PKVPS), 47–51 (PKVPT), 52–56 (PSVPS), 62–66 (PSVPS), 67–71 (PSVPT), 72–76 (PSVPS), and 77–81 (PSVPS). The segment at 42–81 (PKVPSPKVPTPSVPSPYVPTPSVPSPSVPTPSVPSPSVPS) is 7 X 5 AA repeats of P-[KS]-V-P-[ST].

The protein belongs to the plant LTP family. PEARLI1 subfamily.

It is found in the secreted. It localises to the cell wall. Probable lipid transfer protein (LTP). May improve freezing survival. Seems to control the flowering process and lignin synthesis. Confers resistance to Botrytis cinerea. In Arabidopsis thaliana (Mouse-ear cress), this protein is pEARLI1-like lipid transfer protein 2.